Here is a 247-residue protein sequence, read N- to C-terminus: UDP-2,3-diacylglucosamine hydrolase (247 aa).

The Mn(2+) site is built by Asp8, His10, Asp41, Asn79, and His114. Position 79–80 (Asn79–Arg80) interacts with substrate. The substrate site is built by Asp122, Ser160, Asp171, Gln174, and His202. His202 and His204 together coordinate Mn(2+).

Belongs to the LpxH family. Mn(2+) serves as cofactor.

It is found in the cell inner membrane. It carries out the reaction UDP-2-N,3-O-bis[(3R)-3-hydroxytetradecanoyl]-alpha-D-glucosamine + H2O = 2-N,3-O-bis[(3R)-3-hydroxytetradecanoyl]-alpha-D-glucosaminyl 1-phosphate + UMP + 2 H(+). It functions in the pathway glycolipid biosynthesis; lipid IV(A) biosynthesis; lipid IV(A) from (3R)-3-hydroxytetradecanoyl-[acyl-carrier-protein] and UDP-N-acetyl-alpha-D-glucosamine: step 4/6. In terms of biological role, hydrolyzes the pyrophosphate bond of UDP-2,3-diacylglucosamine to yield 2,3-diacylglucosamine 1-phosphate (lipid X) and UMP by catalyzing the attack of water at the alpha-P atom. Involved in the biosynthesis of lipid A, a phosphorylated glycolipid that anchors the lipopolysaccharide to the outer membrane of the cell. The sequence is that of UDP-2,3-diacylglucosamine hydrolase from Xanthomonas campestris pv. campestris (strain 8004).